We begin with the raw amino-acid sequence, 351 residues long: Porphobilinogen deaminase (351 aa).

C242 carries the post-translational modification S-(dipyrrolylmethanemethyl)cysteine.

This sequence belongs to the HMBS family. In terms of assembly, monomer. Dipyrromethane serves as cofactor.

It carries out the reaction 4 porphobilinogen + H2O = hydroxymethylbilane + 4 NH4(+). It functions in the pathway porphyrin-containing compound metabolism; protoporphyrin-IX biosynthesis; coproporphyrinogen-III from 5-aminolevulinate: step 2/4. In terms of biological role, tetrapolymerization of the monopyrrole PBG into the hydroxymethylbilane pre-uroporphyrinogen in several discrete steps. This Rickettsia africae (strain ESF-5) protein is Porphobilinogen deaminase.